Reading from the N-terminus, the 311-residue chain is Formimidoylglutamase (311 aa).

Mn(2+)-binding residues include histidine 122, aspartate 151, histidine 153, aspartate 155, cysteine 242, and aspartate 244.

This sequence belongs to the arginase family. Homodimer. Requires Mn(2+) as cofactor.

It catalyses the reaction N-formimidoyl-L-glutamate + H2O = formamide + L-glutamate. It functions in the pathway amino-acid degradation; L-histidine degradation into L-glutamate; L-glutamate from N-formimidoyl-L-glutamate (hydrolase route): step 1/1. Catalyzes the conversion of N-formimidoyl-L-glutamate to L-glutamate and formamide. The sequence is that of Formimidoylglutamase from Pseudomonas aeruginosa (strain ATCC 15692 / DSM 22644 / CIP 104116 / JCM 14847 / LMG 12228 / 1C / PRS 101 / PAO1).